A 142-amino-acid chain; its full sequence is Deoxyuridine 5'-triphosphate nucleotidohydrolase (142 aa).

Substrate is bound by residues 62 to 64 (RSG), N75, 79 to 81 (TID), and K89.

This sequence belongs to the dUTPase family. It depends on Mg(2+) as a cofactor.

It catalyses the reaction dUTP + H2O = dUMP + diphosphate + H(+). The protein operates within pyrimidine metabolism; dUMP biosynthesis; dUMP from dCTP (dUTP route): step 2/2. This enzyme is involved in nucleotide metabolism: it produces dUMP, the immediate precursor of thymidine nucleotides and it decreases the intracellular concentration of dUTP so that uracil cannot be incorporated into DNA. The sequence is that of Deoxyuridine 5'-triphosphate nucleotidohydrolase from Nautilia profundicola (strain ATCC BAA-1463 / DSM 18972 / AmH).